The primary structure comprises 490 residues: Colicin-10 (490 aa).

Over residues 1–20 (MDKVTDNSPDVESTESTEGS) the composition is skewed to polar residues. Disordered regions lie at residues 1 to 29 (MDKV…VDTG) and 146 to 171 (QKAR…EIAR). Basic and acidic residues predominate over residues 146 to 170 (QKAREEAEAAEKALREAERQRDEIA). A helical transmembrane segment spans residues 447–467 (IVALMFSFIVGAPLGFWGIAI).

This sequence belongs to the channel forming colicin family.

The protein resides in the host membrane. This colicin is a channel-forming colicin. This class of transmembrane toxins depolarize the cytoplasmic membrane, leading to dissipation of cellular energy. In terms of biological role, colicins are polypeptide toxins produced by and active against E.coli and closely related bacteria. This Escherichia coli protein is Colicin-10 (cta).